Reading from the N-terminus, the 1449-residue chain is DNA polymerase III PolC-type (1449 aa).

The segment at 194 to 231 is disordered; the sequence is AQEKPVKKESSDNKHKSNGGNKGGYEKKSYKDEPKNEN. Composition is skewed to basic and acidic residues over residues 197–208 and 217–229; these read KPVKKESSDNKH and GYEK…EPKN. The Exonuclease domain maps to 435–590; that stretch reads YVVFDIETTG…DDAKATAEIL (156 aa).

Belongs to the DNA polymerase type-C family. PolC subfamily.

The protein localises to the cytoplasm. The catalysed reaction is DNA(n) + a 2'-deoxyribonucleoside 5'-triphosphate = DNA(n+1) + diphosphate. Its function is as follows. Required for replicative DNA synthesis. This DNA polymerase also exhibits 3' to 5' exonuclease activity. The sequence is that of DNA polymerase III PolC-type from Clostridium perfringens (strain 13 / Type A).